The primary structure comprises 142 residues: Transcription antitermination protein NusB (142 aa).

It belongs to the NusB family.

Involved in transcription antitermination. Required for transcription of ribosomal RNA (rRNA) genes. Binds specifically to the boxA antiterminator sequence of the ribosomal RNA (rrn) operons. The sequence is that of Transcription antitermination protein NusB from Streptococcus uberis (strain ATCC BAA-854 / 0140J).